The sequence spans 528 residues: Arginine--tRNA ligase (528 aa).

The short motif at alanine 112–histidine 122 is the 'HIGH' region element.

Belongs to the class-I aminoacyl-tRNA synthetase family. As to quaternary structure, monomer.

The protein resides in the cytoplasm. The enzyme catalyses tRNA(Arg) + L-arginine + ATP = L-arginyl-tRNA(Arg) + AMP + diphosphate. This is Arginine--tRNA ligase from Wolinella succinogenes (strain ATCC 29543 / DSM 1740 / CCUG 13145 / JCM 31913 / LMG 7466 / NCTC 11488 / FDC 602W) (Vibrio succinogenes).